The chain runs to 112 residues: Protein Tat (112 aa).

The interval 1–24 (MDPVDPEMPPWHHPGSKPQTPCNN) is interaction with human CREBBP. Residues 1–48 (MDPVDPEMPPWHHPGSKPQTPCNNCYCKRCCYHCYVCFTKKGLGISHG) form a transactivation region. Zn(2+) contacts are provided by cysteine 22, cysteine 25, and cysteine 27. Residues 22–37 (CNNCYCKRCCYHCYVC) are cysteine-rich. Lysine 28 carries the post-translational modification N6-acetyllysine; by host PCAF. Cysteine 30, histidine 33, cysteine 34, and cysteine 37 together coordinate Zn(2+). Positions 38–48 (FTKKGLGISHG) are core. Residues 45-112 (ISHGRKKRRR…CNSCTRISGQ (68 aa)) are disordered. Positions 49 to 56 (RKKRRRPA) match the Nuclear localization signal, RNA-binding (TAR), and protein transduction motif. The interval 49 to 82 (RKKRRRPAAAASYPDNKDPVPEQHTGRKQKRQEE) is interaction with the host capping enzyme RNGTT. N6-acetyllysine; by host EP300 and GCN5L2 occurs at positions 50 and 51. An asymmetric dimethylarginine; by host PRMT6 mark is found at arginine 52 and arginine 53. Positions 63–91 (DNKDPVPEQHTGRKQKRQEEQEKKVEKET) are enriched in basic and acidic residues. The segment covering 93-112 (PSGQPCHQDSCNSCTRISGQ) has biased composition (polar residues).

Belongs to the lentiviruses Tat family. Interacts with host CCNT1. Associates with the P-TEFb complex composed at least of Tat, P-TEFb (CDK9 and CCNT1), TAR RNA, RNA Pol II. Recruits the HATs CREBBP, TAF1/TFIID, EP300, PCAF and GCN5L2. Interacts with host KAT5/Tip60; this interaction targets the latter to degradation. Interacts with the host deacetylase SIRT1. Interacts with host capping enzyme RNGTT; this interaction stimulates RNGTT. Binds to host KDR, and to the host integrins ITGAV/ITGB3 and ITGA5/ITGB1. Interacts with host KPNB1/importin beta-1 without previous binding to KPNA1/importin alpha-1. Interacts with EIF2AK2. Interacts with host nucleosome assembly protein NAP1L1; this interaction may be required for the transport of Tat within the nucleus, since the two proteins interact at the nuclear rim. Interacts with host C1QBP/SF2P32; this interaction involves lysine-acetylated Tat. Interacts with the host chemokine receptors CCR2, CCR3 and CXCR4. Interacts with host DPP4/CD26; this interaction may trigger an anti-proliferative effect. Interacts with host LDLR. Interacts with the host extracellular matrix metalloproteinase MMP1. Interacts with host PRMT6; this interaction mediates Tat's methylation. Interacts with, and is ubiquitinated by MDM2/Hdm2. Interacts with host PSMC3 and HTATIP2. Interacts with STAB1; this interaction may overcome SATB1-mediated repression of IL2 and IL2RA (interleukin) in T cells by binding to the same domain than HDAC1. Interacts (when acetylated) with human CDK13, thereby increasing HIV-1 mRNA splicing and promoting the production of the doubly spliced HIV-1 protein Nef. Interacts with host TBP; this interaction modulates the activity of transcriptional pre-initiation complex. Interacts with host RELA. Interacts with host PLSCR1; this interaction negatively regulates Tat transactivation activity by altering its subcellular distribution. In terms of processing, asymmetrical arginine methylation by host PRMT6 seems to diminish the transactivation capacity of Tat and affects the interaction with host CCNT1. Post-translationally, acetylation by EP300, CREBBP, GCN5L2/GCN5 and PCAF regulates the transactivation activity of Tat. EP300-mediated acetylation of Lys-50 promotes dissociation of Tat from the TAR RNA through the competitive binding to PCAF's bromodomain. In addition, the non-acetylated Tat's N-terminus can also interact with PCAF. PCAF-mediated acetylation of Lys-28 enhances Tat's binding to CCNT1. Lys-50 is deacetylated by SIRT1. Polyubiquitination by host MDM2 does not target Tat to degradation, but activates its transactivation function and fosters interaction with CCNT1 and TAR RNA. In terms of processing, phosphorylated by EIF2AK2 on serine and threonine residues adjacent to the basic region important for TAR RNA binding and function. Phosphorylation of Tat by EIF2AK2 is dependent on the prior activation of EIF2AK2 by dsRNA.

The protein localises to the host nucleus. It is found in the host nucleolus. The protein resides in the host cytoplasm. It localises to the secreted. In terms of biological role, transcriptional activator that increases RNA Pol II processivity, thereby increasing the level of full-length viral transcripts. Recognizes a hairpin structure at the 5'-LTR of the nascent viral mRNAs referred to as the transactivation responsive RNA element (TAR) and recruits the cyclin T1-CDK9 complex (P-TEFb complex) that will in turn hyperphosphorylate the RNA polymerase II to allow efficient elongation. The CDK9 component of P-TEFb and other Tat-activated kinases hyperphosphorylate the C-terminus of RNA Pol II that becomes stabilized and much more processive. Other factors such as HTATSF1/Tat-SF1, SUPT5H/SPT5, and HTATIP2 are also important for Tat's function. Besides its effect on RNA Pol II processivity, Tat induces chromatin remodeling of proviral genes by recruiting the histone acetyltransferases (HATs) CREBBP, EP300 and PCAF to the chromatin. This also contributes to the increase in proviral transcription rate, especially when the provirus integrates in transcriptionally silent region of the host genome. To ensure maximal activation of the LTR, Tat mediates nuclear translocation of NF-kappa-B by interacting with host RELA. Through its interaction with host TBP, Tat may also modulate transcription initiation. Tat can reactivate a latently infected cell by penetrating in it and transactivating its LTR promoter. In the cytoplasm, Tat is thought to act as a translational activator of HIV-1 mRNAs. Its function is as follows. Extracellular circulating Tat can be endocytosed by surrounding uninfected cells via the binding to several surface receptors such as CD26, CXCR4, heparan sulfate proteoglycans (HSPG) or LDLR. Neurons are rarely infected, but they internalize Tat via their LDLR. Through its interaction with nuclear HATs, Tat is potentially able to control the acetylation-dependent cellular gene expression. Modulates the expression of many cellular genes involved in cell survival, proliferation or in coding for cytokines or cytokine receptors. Tat plays a role in T-cell and neurons apoptosis. Tat induced neurotoxicity and apoptosis probably contribute to neuroAIDS. Circulating Tat also acts as a chemokine-like and/or growth factor-like molecule that binds to specific receptors on the surface of the cells, affecting many cellular pathways. In the vascular system, Tat binds to ITGAV/ITGB3 and ITGA5/ITGB1 integrins dimers at the surface of endothelial cells and competes with bFGF for heparin-binding sites, leading to an excess of soluble bFGF. This Homo sapiens (Human) protein is Protein Tat.